Reading from the N-terminus, the 365-residue chain is Carbamoyl phosphate synthase small chain (365 aa).

CPSase regions lie at residues methionine 1–glycine 166 and methionine 1–histidine 169. L-glutamine-binding residues include serine 45, glycine 218, and glycine 220. Residues arginine 170–glutamate 357 enclose the Glutamine amidotransferase type-1 domain. Residue cysteine 245 is the Nucleophile of the active site. Positions 246, 249, 287, 289, and 290 each coordinate L-glutamine. Active-site residues include histidine 330 and glutamate 332.

Belongs to the CarA family. As to quaternary structure, composed of two chains; the small (or glutamine) chain promotes the hydrolysis of glutamine to ammonia, which is used by the large (or ammonia) chain to synthesize carbamoyl phosphate. Tetramer of heterodimers (alpha,beta)4.

It carries out the reaction hydrogencarbonate + L-glutamine + 2 ATP + H2O = carbamoyl phosphate + L-glutamate + 2 ADP + phosphate + 2 H(+). The catalysed reaction is L-glutamine + H2O = L-glutamate + NH4(+). It functions in the pathway amino-acid biosynthesis; L-arginine biosynthesis; carbamoyl phosphate from bicarbonate: step 1/1. Its pathway is pyrimidine metabolism; UMP biosynthesis via de novo pathway; (S)-dihydroorotate from bicarbonate: step 1/3. Functionally, small subunit of the glutamine-dependent carbamoyl phosphate synthetase (CPSase). CPSase catalyzes the formation of carbamoyl phosphate from the ammonia moiety of glutamine, carbonate, and phosphate donated by ATP, constituting the first step of 2 biosynthetic pathways, one leading to arginine and/or urea and the other to pyrimidine nucleotides. The small subunit (glutamine amidotransferase) binds and cleaves glutamine to supply the large subunit with the substrate ammonia. This is Carbamoyl phosphate synthase small chain from Bacillus cereus (strain ATCC 10987 / NRS 248).